A 431-amino-acid chain; its full sequence is Levansucrase LscC (431 aa).

Sucrose contacts are provided by Trp61, Asp62, Ala148, Arg218, and Asp219. The active-site Nucleophile is the Asp62. Glu303 acts as the Proton donor/acceptor in catalysis.

It belongs to the glycosyl hydrolase 68 family.

It is found in the periplasm. The enzyme catalyses [6)-beta-D-fructofuranosyl-(2-&gt;](n) alpha-D-glucopyranoside + sucrose = [6)-beta-D-fructofuranosyl-(2-&gt;](n+1) alpha-D-glucopyranoside + D-glucose. Its function is as follows. Catalyzes the synthesis of levan, a fructose polymer, by transferring the fructosyl moiety from sucrose to a growing acceptor molecule. The sequence is that of Levansucrase LscC from Pseudomonas savastanoi pv. glycinea (Pseudomonas syringae pv. glycinea).